Consider the following 252-residue polypeptide: Enolase-phosphatase E1 (252 aa).

2 residues coordinate Mg(2+): aspartate 14 and glutamate 16. Residues 142 to 143 (SS) and lysine 176 each bind substrate. Aspartate 201 contributes to the Mg(2+) binding site.

The protein belongs to the HAD-like hydrolase superfamily. MasA/MtnC family. In terms of assembly, monomer. Mg(2+) is required as a cofactor.

It is found in the cytoplasm. Its subcellular location is the nucleus. The catalysed reaction is 5-methylsulfanyl-2,3-dioxopentyl phosphate + H2O = 1,2-dihydroxy-5-(methylsulfanyl)pent-1-en-3-one + phosphate. It functions in the pathway amino-acid biosynthesis; L-methionine biosynthesis via salvage pathway; L-methionine from S-methyl-5-thio-alpha-D-ribose 1-phosphate: step 3/6. Its pathway is amino-acid biosynthesis; L-methionine biosynthesis via salvage pathway; L-methionine from S-methyl-5-thio-alpha-D-ribose 1-phosphate: step 4/6. Bifunctional enzyme that catalyzes the enolization of 2,3-diketo-5-methylthiopentyl-1-phosphate (DK-MTP-1-P) into the intermediate 2-hydroxy-3-keto-5-methylthiopentenyl-1-phosphate (HK-MTPenyl-1-P), which is then dephosphorylated to form the acireductone 1,2-dihydroxy-3-keto-5-methylthiopentene (DHK-MTPene). This Drosophila ananassae (Fruit fly) protein is Enolase-phosphatase E1.